The following is a 232-amino-acid chain: Proteasome subunit alpha type-2 (232 aa).

Belongs to the peptidase T1A family. As to quaternary structure, the 26S proteasome consists of a 20S proteasome core and two 19S regulatory subunits. The 20S proteasome core is composed of 28 subunits that are arranged in four stacked rings, resulting in a barrel-shaped structure. The two end rings are each formed by seven alpha subunits, and the two central rings are each formed by seven beta subunits. The catalytic chamber with the active sites is on the inside of the barrel.

Its subcellular location is the cytoplasm. The protein localises to the nucleus. Its function is as follows. The proteasome is a multicatalytic proteinase complex which is characterized by its ability to cleave peptides with Arg, Phe, Tyr, Leu, and Glu adjacent to the leaving group at neutral or slightly basic pH. The proteasome has an ATP-dependent proteolytic activity. The protein is Proteasome subunit alpha type-2 (psmA2) of Dictyostelium discoideum (Social amoeba).